We begin with the raw amino-acid sequence, 142 residues long: Transcriptional regulator MraZ (142 aa).

2 SpoVT-AbrB domains span residues A5–E51 and A77–T120.

This sequence belongs to the MraZ family. As to quaternary structure, forms oligomers.

The protein resides in the cytoplasm. It is found in the nucleoid. This chain is Transcriptional regulator MraZ, found in Paraburkholderia xenovorans (strain LB400).